Here is a 660-residue protein sequence, read N- to C-terminus: PAN2-PAN3 deadenylation complex subunit PAN3 (660 aa).

Residues 7-36 (SAKDTFCKNVLIYGYCKYENKGCAFSHTVK) form a C3H1-type zinc finger. Disordered regions lie at residues 36-60 (KPTSSVPGSQGSNATTNSSGNTNAD) and 150-186 (SPVMAQSVSTPGAKANGNIQHNPYLPGNAGTPQPTSA). The segment covering 43–59 (GSQGSNATTNSSGNTNA) has biased composition (low complexity). A PABPC-interacting motif-2 (PAM-2) motif is present at residues 59-79 (ADMKKKFNFNTPSFQPSTVPN). Residues 150 to 159 (SPVMAQSVST) show a composition bias toward polar residues. A pseudokinase domain region spans residues 252 to 528 (QTLPRSNLPD…LQEFNRNHLS (277 aa)). ATP is bound by residues Arg304, 358–365 (DYFPNSNT), and 415–416 (SK). Positions 529-567 (RRILNFCSNAQDSQDFMESQLSTELENARVFRLITKLNF) form a coiled coil. Residues 568–660 (IIDRPEYDND…DSAFRTLTRG (93 aa)) form a knob domain region.

It belongs to the protein kinase superfamily. PAN3 family. As to quaternary structure, homodimer. Forms a heterotrimer with a catalytic subunit PAN2 to form the poly(A)-nuclease (PAN) deadenylation complex. Interacts (via PAM-2 motif) with poly(A)-binding protein PAB1 (via PABC domain), conferring substrate specificity of the enzyme complex.

The protein localises to the cytoplasm. In terms of biological role, regulatory subunit of the poly(A)-nuclease (PAN) deadenylation complex, one of two cytoplasmic mRNA deadenylases involved in mRNA turnover. PAN specifically shortens poly(A) tails of RNA and the activity is stimulated by poly(A)-binding protein PAB1. PAN deadenylation is followed by rapid degradation of the shortened mRNA tails by the CCR4-NOT complex. Deadenylated mRNAs are then degraded by two alternative mechanisms, namely exosome-mediated 3'-5' exonucleolytic degradation, or deadenylation-dependent mRNA decaping and subsequent 5'-3' exonucleolytic degradation by XRN1. May also be involved in post-transcriptional maturation of mRNA poly(A) tails. PAN3 acts as a positive regulator for PAN activity, recruiting the catalytic subunit PAN2 to mRNA via its interaction with RNA and with PAB1. This chain is PAN2-PAN3 deadenylation complex subunit PAN3, found in Debaryomyces hansenii (strain ATCC 36239 / CBS 767 / BCRC 21394 / JCM 1990 / NBRC 0083 / IGC 2968) (Yeast).